Reading from the N-terminus, the 102-residue chain is Cytochrome c (102 aa).

Gly1 carries the N-acetylglycine modification. Residues 1–11 (GDAERGKKLFE) are compositionally biased toward basic and acidic residues. A disordered region spans residues 1–26 (GDAERGKKLFESRAGQCHSSQKGVNS). Residues Cys17, His18, and Met79 each contribute to the heme c site. The segment covering 17-26 (CHSSQKGVNS) has biased composition (polar residues). Position 85 is an N6,N6,N6-trimethyllysine (Lys85).

This sequence belongs to the cytochrome c family. Post-translationally, binds 1 heme c group covalently per subunit.

Its subcellular location is the mitochondrion intermembrane space. Electron carrier protein. The oxidized form of the cytochrome c heme group can accept an electron from the heme group of the cytochrome c1 subunit of cytochrome reductase. Cytochrome c then transfers this electron to the cytochrome oxidase complex, the final protein carrier in the mitochondrial electron-transport chain. This is Cytochrome c from Euglena viridis (Cercaria viridis).